Consider the following 316-residue polypeptide: MPEQEAFRLRCPVCGSTDIVFNEETGEYVCARCGTIVLDRYVDQGPEWRAFTPEERERRGRTGAPLSPTLHDHGLSTVIDHRDRDALGKRLSPRKRQEVQRLRKWQLRARIQTGMDRNLTIAMNELDRMANLLNLPKQIKEEAAVIYRKAVEKGLVRGRSIESVVAAVIYAACRIHHQPRTLDEIAKKLEVNRKEVARCYRLITKELKLKVPIADAMDHIPRIGEALKLRGDIIEYAMKIMEKIKGHPITAGKDPAGIAAAVIYIAVMQKGERRTQKEIANVAGVTEVTVRNRYKEIMKVLNEMDLEEIEKEVSKK.

Residues 7-38 (FRLRCPVCGSTDIVFNEETGEYVCARCGTIVL) form a TFIIB-type zinc finger. Positions 11, 14, 30, and 33 each coordinate Zn(2+). The disordered stretch occupies residues 51–73 (FTPEERERRGRTGAPLSPTLHDH). 2 tandem repeats follow at residues 124–207 (NELD…TKEL) and 218–299 (DHIP…EIMK).

The protein belongs to the TFIIB family.

Its function is as follows. Stabilizes TBP binding to an archaeal box-A promoter. Also responsible for recruiting RNA polymerase II to the pre-initiation complex (DNA-TBP-TFIIB). This is Transcription initiation factor IIB from Ignicoccus hospitalis (strain KIN4/I / DSM 18386 / JCM 14125).